The sequence spans 207 residues: Ribosomal RNA small subunit methyltransferase G (207 aa).

Residues Gly75, Met80, 126–127, and Arg141 each bind S-adenosyl-L-methionine; that span reads VE.

It belongs to the methyltransferase superfamily. RNA methyltransferase RsmG family.

Its subcellular location is the cytoplasm. It carries out the reaction guanosine(527) in 16S rRNA + S-adenosyl-L-methionine = N(7)-methylguanosine(527) in 16S rRNA + S-adenosyl-L-homocysteine. Its function is as follows. Specifically methylates the N7 position of guanine in position 527 of 16S rRNA. This chain is Ribosomal RNA small subunit methyltransferase G, found in Laribacter hongkongensis (strain HLHK9).